The primary structure comprises 682 residues: Potassium-transporting ATPase ATP-binding subunit (682 aa).

4 helical membrane-spanning segments follow: residues 34 to 54 (PVMF…LAMV), 58 to 78 (IAGS…TVLF), 219 to 239 (IALT…TATL), and 254 to 274 (VLVA…LSAI). Aspartate 307 acts as the 4-aspartylphosphate intermediate in catalysis. ATP-binding positions include aspartate 344, glutamate 348, 377–384 (FTAQSRMS), and lysine 395. The Mg(2+) site is built by aspartate 518 and aspartate 522. The next 3 membrane-spanning stretches (helical) occupy residues 588 to 608 (FAII…LNVM), 616 to 636 (AILS…PLAL), and 662 to 682 (LVVP…LGLA).

This sequence belongs to the cation transport ATPase (P-type) (TC 3.A.3) family. Type IA subfamily. The system is composed of three essential subunits: KdpA, KdpB and KdpC.

It localises to the cell inner membrane. The enzyme catalyses K(+)(out) + ATP + H2O = K(+)(in) + ADP + phosphate + H(+). In terms of biological role, part of the high-affinity ATP-driven potassium transport (or Kdp) system, which catalyzes the hydrolysis of ATP coupled with the electrogenic transport of potassium into the cytoplasm. This subunit is responsible for energy coupling to the transport system and for the release of the potassium ions to the cytoplasm. The sequence is that of Potassium-transporting ATPase ATP-binding subunit from Salmonella typhimurium (strain LT2 / SGSC1412 / ATCC 700720).